Consider the following 1816-residue polypeptide: Kinesin-like protein KIF1B (1816 aa).

Serine 2 is subject to N-acetylserine. The Kinesin motor domain maps to 5-354 (SVKVAVRVRP…LRYADRAKQI (350 aa)). 97-104 (GQTGAGKS) provides a ligand contact to ATP. Positions 270 to 350 (NINKSLTTLG…TLSTLRYADR (81 aa)) are interaction with KIFBP. A coiled-coil region spans residues 365 to 386 (NAKLVRELKEEVTRLKDLLRAQ). The tract at residues 431–450 (FSTASMGSLTSSPSSCSLSS) is disordered. The span at 432–450 (STASMGSLTSSPSSCSLSS) shows a compositional bias: low complexity. Positions 470–502 (GEEAIERLKESEKIIAELNETWEEKLRKTEAIR) form a coiled coil. The 57-residue stretch at 556–612 (TRVGQADAERRQDIVLSGAHIKEEHCIFRSERSNSGEVIVTLEPCERSETYVNGKRV) folds into the FHA domain. Threonine 647 and threonine 652 each carry phosphothreonine. A phosphoserine mark is found at glutamine 663 and glutamate 665. 2 coiled-coil regions span residues 668–737 (EKQG…EEEV) and 841–869 (SLEK…AQDE). Phosphoserine occurs at positions 1054 and 1057. Threonine 1075 bears the Phosphothreonine mark. A phosphoserine mark is found at asparagine 1141, serine 1416, serine 1454, and serine 1487. Residues 1550–1570 (STTTFESAITPSESSGYDSGD) are disordered. Positions 1554–1566 (FESAITPSESSGY) are enriched in polar residues. Serine 1573, serine 1603, serine 1610, and serine 1613 each carry phosphoserine. Positions 1617-1660 (RDPSESSFSSATLTPSSTCPSLVDSRSNSLDQKTPEANSRASSP) are disordered. A compositionally biased stretch (low complexity) spans 1621–1634 (ESSFSSATLTPSST). Residues 1640–1658 (DSRSNSLDQKTPEANSRAS) are compositionally biased toward polar residues. Residues 1702-1799 (VSKKGYLHFK…WLYAFNPLLA (98 aa)) enclose the PH domain.

It belongs to the TRAFAC class myosin-kinesin ATPase superfamily. Kinesin family. Unc-104 subfamily. Monomer. Interacts with KIFBP; positively regulates KIF1B microtubule motor activity. Interacts (via C-terminus end of the kinesin-motor domain) with CHP1; the interaction occurs in a calcium-dependent manner. As to quaternary structure, interacts with MADD (via death domain); links this isoform to Rab3-carrying vesicles in anterograde synaptic vesicle transport. In terms of tissue distribution, isoform 3 is abundant in the skeletal muscle. It is also expressed in fetal brain, lung and kidney, and adult heart, placenta, testis, ovary and small intestine. Isoform 2 is abundant in the brain and also expressed in fetal heart, lung, liver and kidney, and adult skeletal muscle, placenta, liver, kidney, heart, spleen, thymus, prostate, testis, ovary, small intestine, colon and pancreas.

Its subcellular location is the cytoplasm. It is found in the cytoskeleton. It localises to the cytoplasmic vesicle. The protein localises to the secretory vesicle. The protein resides in the synaptic vesicle membrane. Its subcellular location is the mitochondrion. The enzyme catalyses ATP + H2O + a kinesin associated with a microtubule at position (n) = ADP + phosphate a kinesin associated with a microtubule at position (n+1, toward the plus end).. Has a plus-end-directed microtubule motor activity and functions as a motor for transport of vesicles and organelles along microtubules. Its function is as follows. Has a plus-end-directed microtubule motor activity and functions as a motor for anterograde synaptic vesicle transport along axonal microtubules from the cell body to the presynapse in neuronal cells. Functions as a downstream effector in a developmental apoptotic pathway that is activated when nerve growth factor (NGF) becomes limiting for neuronal progenitor cells. Functionally, has a plus-end-directed microtubule motor activity and functions as a motor for anterograde transport of mitochondria. This Homo sapiens (Human) protein is Kinesin-like protein KIF1B.